The chain runs to 209 residues: Histidine biosynthesis bifunctional protein HisIE (209 aa).

The phosphoribosyl-AMP cyclohydrolase stretch occupies residues 1 to 123; that stretch reads MEIEKLLEQV…VLPIDYSLSI (123 aa). The interval 124–209 is phosphoribosyl-ATP pyrophosphohydrolase; that stretch reads LKELEEIIKR…VMNELRRRRK (86 aa).

The protein in the N-terminal section; belongs to the PRA-CH family. It in the C-terminal section; belongs to the PRA-PH family.

The protein resides in the cytoplasm. It catalyses the reaction 1-(5-phospho-beta-D-ribosyl)-ATP + H2O = 1-(5-phospho-beta-D-ribosyl)-5'-AMP + diphosphate + H(+). The catalysed reaction is 1-(5-phospho-beta-D-ribosyl)-5'-AMP + H2O = 1-(5-phospho-beta-D-ribosyl)-5-[(5-phospho-beta-D-ribosylamino)methylideneamino]imidazole-4-carboxamide. It functions in the pathway amino-acid biosynthesis; L-histidine biosynthesis; L-histidine from 5-phospho-alpha-D-ribose 1-diphosphate: step 2/9. The protein operates within amino-acid biosynthesis; L-histidine biosynthesis; L-histidine from 5-phospho-alpha-D-ribose 1-diphosphate: step 3/9. The chain is Histidine biosynthesis bifunctional protein HisIE (hisI) from Pyrococcus furiosus (strain ATCC 43587 / DSM 3638 / JCM 8422 / Vc1).